Here is a 112-residue protein sequence, read N- to C-terminus: Putative pterin-4-alpha-carbinolamine dehydratase (112 aa).

Belongs to the pterin-4-alpha-carbinolamine dehydratase family.

The catalysed reaction is (4aS,6R)-4a-hydroxy-L-erythro-5,6,7,8-tetrahydrobiopterin = (6R)-L-erythro-6,7-dihydrobiopterin + H2O. This Shewanella woodyi (strain ATCC 51908 / MS32) protein is Putative pterin-4-alpha-carbinolamine dehydratase.